Here is a 156-residue protein sequence, read N- to C-terminus: Endoribonuclease YbeY (156 aa).

The Zn(2+) site is built by H105, H109, and D115.

It belongs to the endoribonuclease YbeY family. Requires Zn(2+) as cofactor.

It localises to the cytoplasm. Single strand-specific metallo-endoribonuclease involved in late-stage 70S ribosome quality control and in maturation of the 3' terminus of the 16S rRNA. This Chlorobium chlorochromatii (strain CaD3) protein is Endoribonuclease YbeY.